We begin with the raw amino-acid sequence, 602 residues long: Myotubularin (602 aa).

A disordered region spans residues 1–32 (MASNSTPKYNSNSLENSLRRSPGDGMNHEQND). A compositionally biased stretch (basic and acidic residues) spans 17-31 (SLRRSPGDGMNHEQN). A GRAM domain is found at 28–96 (HEQNDEIPCL…GVIARIEKMG (69 aa)). Residues 162–537 (GWAVYDAMTE…RHLELWVNYY (376 aa)) form the Myotubularin phosphatase domain. Asparagine 287, asparagine 312, and isoleucine 313 together coordinate a 1,2-diacyl-sn-glycero-3-phospho-(1D-myo-inositol-3,5-bisphosphate). Residues asparagine 287, asparagine 312, and isoleucine 313 each coordinate a 1,2-diacyl-sn-glycero-3-phospho-(1D-myo-inositol-3-phosphate). Cysteine 374 functions as the Phosphocysteine intermediate in the catalytic mechanism. A 1,2-diacyl-sn-glycero-3-phospho-(1D-myo-inositol-3,5-bisphosphate) is bound by residues serine 375, aspartate 376, glycine 377, tryptophan 378, aspartate 379, arginine 380, lysine 416, and arginine 420. A 1,2-diacyl-sn-glycero-3-phospho-(1D-myo-inositol-3-phosphate)-binding residues include serine 375, aspartate 376, glycine 377, tryptophan 378, aspartate 379, and arginine 380. Arginine 420 contributes to the a 1,2-diacyl-sn-glycero-3-phospho-(1D-myo-inositol-3-phosphate) binding site. Residues 574-602 (QITNSPKMNSSTTSPSSPSQIMPQVHTPF) are disordered. Positions 583–592 (SSTTSPSSPS) are enriched in low complexity.

Belongs to the protein-tyrosine phosphatase family. Non-receptor class myotubularin subfamily.

The protein resides in the cytoplasm. It localises to the cell membrane. It is found in the cell projection. The protein localises to the filopodium. Its subcellular location is the ruffle. The protein resides in the late endosome. It localises to the myofibril. It is found in the sarcomere. The enzyme catalyses a 1,2-diacyl-sn-glycero-3-phospho-(1D-myo-inositol-3-phosphate) + H2O = a 1,2-diacyl-sn-glycero-3-phospho-(1D-myo-inositol) + phosphate. It catalyses the reaction a 1,2-diacyl-sn-glycero-3-phospho-(1D-myo-inositol-3,5-bisphosphate) + H2O = a 1,2-diacyl-sn-glycero-3-phospho-(1D-myo-inositol-5-phosphate) + phosphate. The catalysed reaction is 1,2-dioctanoyl-sn-glycero-3-phospho-(1-D-myo-inositol-3-phosphate) + H2O = 1,2-dioctanoyl-sn-glycero-3-phospho-(1D-myo-inositol) + phosphate. It carries out the reaction 1,2-dioctanoyl-sn-glycero-3-phospho-(1D-myo-inositol-3,5-bisphosphate) + H2O = 1,2-dioctanoyl-sn-glycero-3-phospho-(1D-myo-inositol-5-phosphate) + phosphate. The enzyme catalyses 1,2-dihexadecanoyl-sn-glycero-3-phospho-(1D-myo-inositol-3,5-phosphate) + H2O = 1,2-dihexadecanoyl-sn-glycero-3-phospho-(1D-myo-inositol-5-phosphate) + phosphate. In terms of biological role, lipid phosphatase which dephosphorylates phosphatidylinositol 3-monophosphate (PI3P) and phosphatidylinositol 3,5-bisphosphate (PI(3,5)P2). This is Myotubularin (mtm1) from Xenopus tropicalis (Western clawed frog).